Consider the following 405-residue polypeptide: Cytoplasmic tRNA 2-thiolation protein 2 (405 aa).

It belongs to the CTU2/NCS2 family.

It is found in the cytoplasm. The protein operates within tRNA modification; 5-methoxycarbonylmethyl-2-thiouridine-tRNA biosynthesis. Its function is as follows. Plays a central role in 2-thiolation of mcm(5)S(2)U at tRNA wobble positions of tRNA(Lys), tRNA(Glu) and tRNA(Gln). May act by forming a heterodimer with NCS6/CTU1 that ligates sulfur from thiocarboxylated URM1 onto the uridine of tRNAs at wobble position. This is Cytoplasmic tRNA 2-thiolation protein 2 from Drosophila simulans (Fruit fly).